An 858-amino-acid chain; its full sequence is Leucine--tRNA ligase (858 aa).

Residues 42–52 (PYPSGRLHMGH) carry the 'HIGH' region motif. A 'KMSKS' region motif is present at residues 618–622 (KMSKS). Lysine 621 is a binding site for ATP.

This sequence belongs to the class-I aminoacyl-tRNA synthetase family.

The protein localises to the cytoplasm. The enzyme catalyses tRNA(Leu) + L-leucine + ATP = L-leucyl-tRNA(Leu) + AMP + diphosphate. This Vibrio atlanticus (strain LGP32) (Vibrio splendidus (strain Mel32)) protein is Leucine--tRNA ligase.